Consider the following 290-residue polypeptide: Ribosomal RNA small subunit methyltransferase A (290 aa).

Positions 27, 29, 54, 75, 100, and 125 each coordinate S-adenosyl-L-methionine.

The protein belongs to the class I-like SAM-binding methyltransferase superfamily. rRNA adenine N(6)-methyltransferase family. RsmA subfamily.

It is found in the cytoplasm. It catalyses the reaction adenosine(1518)/adenosine(1519) in 16S rRNA + 4 S-adenosyl-L-methionine = N(6)-dimethyladenosine(1518)/N(6)-dimethyladenosine(1519) in 16S rRNA + 4 S-adenosyl-L-homocysteine + 4 H(+). Functionally, specifically dimethylates two adjacent adenosines (A1518 and A1519) in the loop of a conserved hairpin near the 3'-end of 16S rRNA in the 30S particle. May play a critical role in biogenesis of 30S subunits. In Streptococcus pneumoniae (strain ATCC 700669 / Spain 23F-1), this protein is Ribosomal RNA small subunit methyltransferase A.